A 142-amino-acid polypeptide reads, in one-letter code: MGDSESFVGKNWNGLKDFWSDRLSFFENYTRFTKRDAPLPSWSSSDVEEFIASDPVHGPTLKTAREAVTFGVTGAALGAVSTAAFAWKYSRSPHGAALSFLGGGVFGWTFGQEVANHTLQLYKLDTMAAQVKFMEWWERKSQ.

Glycine 2 bears the N-acetylglycine mark.

Component of complex II composed of eight subunits in plants: four classical SDH subunits SDH1, SDH2, SDH3 and SDH4 (a flavoprotein (FP), an iron-sulfur protein (IP), and a cytochrome b composed of a large and a small subunit.), as well as four subunits unknown in mitochondria from bacteria and heterotrophic eukaryotes.

It is found in the mitochondrion inner membrane. The protein operates within carbohydrate metabolism; tricarboxylic acid cycle. This chain is Succinate dehydrogenase subunit 6, mitochondrial, found in Arabidopsis thaliana (Mouse-ear cress).